Consider the following 1140-residue polypeptide: Eukaryotic translation initiation factor 3 subunit A (1140 aa).

The 184-residue stretch at Leu319–Thr502 folds into the PCI domain. 6 stretches are compositionally biased toward basic and acidic residues: residues Asn590–Glu624, Arg826–Gly903, Asp925–Glu965, Ser1000–Asn1019, Arg1026–Arg1053, and Asp1061–Arg1087. Disordered regions lie at residues Asn590–Ile632 and Arg826–Arg1140. Positions Pro1091–Asn1101 are enriched in gly residues. Positions Pro1108–Asp1130 are enriched in basic and acidic residues.

It belongs to the eIF-3 subunit A family. In terms of assembly, component of the eukaryotic translation initiation factor 3 (eIF-3) complex. The eIF-3 complex interacts with pix.

Its subcellular location is the cytoplasm. In terms of biological role, RNA-binding component of the eukaryotic translation initiation factor 3 (eIF-3) complex, which is involved in protein synthesis of a specialized repertoire of mRNAs and, together with other initiation factors, stimulates binding of mRNA and methionyl-tRNAi to the 40S ribosome. The eIF-3 complex specifically targets and initiates translation of a subset of mRNAs involved in cell proliferation. In Drosophila willistoni (Fruit fly), this protein is Eukaryotic translation initiation factor 3 subunit A.